Here is a 209-residue protein sequence, read N- to C-terminus: uncharacterized protein (209 aa).

The first 17 residues, 1–17 (MKKLVTGLLALSLFLAA), serve as a signal peptide directing secretion. Positions 17–106 (ACGQDSDQQK…SGQTTNNQKS (90 aa)) are disordered. The N-palmitoyl cysteine moiety is linked to residue Cys18. Cys18 is lipidated: S-diacylglycerol cysteine. Positions 23-70 (DQQKDSNKEKDDKAKTEQQDKKTNDSSKDKKDNKDDSKDVNKDNKDNS) are enriched in basic and acidic residues. Over residues 71–106 (ANDNQQQSNSNATNNDQNQTNNNQSNSGQTTNNQKS) the composition is skewed to low complexity.

The protein localises to the cell membrane. This is an uncharacterized protein from Staphylococcus aureus (strain MRSA252).